We begin with the raw amino-acid sequence, 246 residues long: E3 ubiquitin-protein ligase MARCHF2 (246 aa).

The RING-CH-type zinc finger occupies 56–116 (GTQSDGPICR…ELCHTEFAVE (61 aa)). Positions 64, 67, 80, 82, 90, 93, 106, and 109 each coordinate Zn(2+). A run of 2 helical transmembrane segments spans residues 138–158 (LFCD…SGWL) and 175–195 (AVGL…WTLV).

The protein resides in the endoplasmic reticulum membrane. It localises to the lysosome membrane. The protein localises to the endosome membrane. The enzyme catalyses S-ubiquitinyl-[E2 ubiquitin-conjugating enzyme]-L-cysteine + [acceptor protein]-L-lysine = [E2 ubiquitin-conjugating enzyme]-L-cysteine + N(6)-ubiquitinyl-[acceptor protein]-L-lysine.. It participates in protein modification; protein ubiquitination. In terms of biological role, E3 ubiquitin-protein ligase which may be involved in endosomal trafficking. E3 ubiquitin ligases accept ubiquitin from an E2 ubiquitin-conjugating enzyme in the form of a thioester and then directly transfer the ubiquitin to targeted substrates. In Xenopus laevis (African clawed frog), this protein is E3 ubiquitin-protein ligase MARCHF2 (marchf2).